We begin with the raw amino-acid sequence, 154 residues long: Spermatogenesis-associated protein 19, mitochondrial (154 aa).

The transit peptide at 1–24 (MIITTWIVYILARKGAGLPFPPKV) directs the protein to the mitochondrion. Ser26 and Ser116 each carry phosphoserine.

Its subcellular location is the mitochondrion outer membrane. The protein resides in the mitochondrion. It localises to the cell projection. It is found in the cilium. The protein localises to the flagellum. Its function is as follows. Essential for sperm motility and male fertility. Plays an important role in sperm motility by regulating the organization and function of the mitochondria and is also required for correct sperm midpiece assembly. This Bos taurus (Bovine) protein is Spermatogenesis-associated protein 19, mitochondrial (SPATA19).